The primary structure comprises 60 residues: UPF0434 protein Ssed_2824 (60 aa).

Belongs to the UPF0434 family.

The protein is UPF0434 protein Ssed_2824 of Shewanella sediminis (strain HAW-EB3).